A 304-amino-acid polypeptide reads, in one-letter code: Quinolinate synthase (304 aa).

The iminosuccinate site is built by histidine 24 and serine 41. Cysteine 86 is a binding site for [4Fe-4S] cluster. Iminosuccinate-binding positions include 112-114 (YVN) and serine 129. Residue cysteine 171 participates in [4Fe-4S] cluster binding. Residues 197–199 (HPE) and threonine 214 contribute to the iminosuccinate site. Cysteine 259 is a binding site for [4Fe-4S] cluster.

The protein belongs to the quinolinate synthase family. Type 2 subfamily. Requires [4Fe-4S] cluster as cofactor.

It localises to the cytoplasm. It carries out the reaction iminosuccinate + dihydroxyacetone phosphate = quinolinate + phosphate + 2 H2O + H(+). It participates in cofactor biosynthesis; NAD(+) biosynthesis; quinolinate from iminoaspartate: step 1/1. Its function is as follows. Catalyzes the condensation of iminoaspartate with dihydroxyacetone phosphate to form quinolinate. The polypeptide is Quinolinate synthase (Methanosarcina barkeri (strain Fusaro / DSM 804)).